Consider the following 418-residue polypeptide: MKCFLFSGGDKRGEQKTPISVSLTSIFSDREINRSGSEFNSRDVSGTSTESSMGRKNSYPPVSTRASNLREFSITDLKSATKNFSRSVMIGEGGFGCVFRGTVRNLEDSSVKIEVAVKQLGKRGLQGHKEWVTEVNFLGIVEHTNLVKLLGYCAEDDERGIQRLLVYEYMPNRSVEFHLSPRSLTVLTWDLRLRIAQDAARGLTYLHEEMEFQIIFRDFKSSNILLDEDWKAKLSDFGLARLGPSEGLTHVSTDVVGTMGYAAPEYIQTGRLTSKSDVWGYGVFLYELITGRRPVDRNRPKGEQKLLEWVRPYLSDTRKFKLILDPRLEGKYPIKSVQKLAVVANRCLVRNSKARPKMSEVLEMVNKIVEASSGNGSPQLVPLNSVKASRDARGKNNGGGGEGGWFGKLWNPKTIRAC.

Residues 36 to 63 (GSEFNSRDVSGTSTESSMGRKNSYPPVS) form a disordered region. Residues 84–369 (FSRSVMIGEG…EVLEMVNKIV (286 aa)) form the Protein kinase domain. ATP-binding positions include 90–98 (IGEGGFGCV) and lysine 118. Residue aspartate 218 is the Proton acceptor of the active site. Phosphoserine occurs at positions 373, 377, and 385.

This sequence belongs to the protein kinase superfamily. Ser/Thr protein kinase family. Interacts with FLS2.

It localises to the cell membrane. It catalyses the reaction L-seryl-[protein] + ATP = O-phospho-L-seryl-[protein] + ADP + H(+). The enzyme catalyses L-threonyl-[protein] + ATP = O-phospho-L-threonyl-[protein] + ADP + H(+). Functionally, involved in the activation of early immune responses. Plays a role in pattern-triggered immunity (PTI) induced by pathogen-associated molecular patterns (PAMPs) and damage-associated molecular patterns (DAMPs). Contributes to PTI in response to the bacterial pathogen Pseudomonas syringae pv maculicola strain ES4326. Contributes to PTI in response to the bacterial pathogen Pseudomonas syringae pv tomato strain DC3000. Functions redundantly with PCRK2 in basal resistance against bacterial pathogens and in regulation of plant immunity. Functions together with PCRK2 downstream of the PAMP receptor FLS2. Contributes to the induction of SARD1 and CBP60G, which are transcriptional activator of ICS1, an enzyme involved in salicylate (SA) biosynthesis upon pathogen attack. The chain is Serine/threonine-protein kinase PCRK1 from Arabidopsis thaliana (Mouse-ear cress).